A 194-amino-acid polypeptide reads, in one-letter code: uncharacterized protein (194 aa).

Disordered regions lie at residues 1-21 and 73-97; these read MPKGRRGSQNPKMSQRPAPPL and PATVPPPPPGLGPPSERPCPPPWPS. Over residues 73 to 96 the composition is skewed to pro residues; that stretch reads PATVPPPPPGLGPPSERPCPPPWP.

This is an uncharacterized protein from Mus musculus (Mouse).